We begin with the raw amino-acid sequence, 101 residues long: Acylphosphatase (101 aa).

In terms of domain architecture, Acylphosphatase-like spans 12-98 (RVHVFVTGRV…EGLRGFEVKR (87 aa)). Active-site residues include Arg-27 and Asn-45.

Belongs to the acylphosphatase family.

It carries out the reaction an acyl phosphate + H2O = a carboxylate + phosphate + H(+). This chain is Acylphosphatase (acyP), found in Trichormus variabilis (strain ATCC 29413 / PCC 7937) (Anabaena variabilis).